A 155-amino-acid polypeptide reads, in one-letter code: Ribosomal RNA large subunit methyltransferase H (155 aa).

S-adenosyl-L-methionine-binding positions include leucine 72, glycine 103, and 122–127; that span reads LSPLTL.

This sequence belongs to the RNA methyltransferase RlmH family. As to quaternary structure, homodimer.

Its subcellular location is the cytoplasm. The enzyme catalyses pseudouridine(1915) in 23S rRNA + S-adenosyl-L-methionine = N(3)-methylpseudouridine(1915) in 23S rRNA + S-adenosyl-L-homocysteine + H(+). Its function is as follows. Specifically methylates the pseudouridine at position 1915 (m3Psi1915) in 23S rRNA. This chain is Ribosomal RNA large subunit methyltransferase H, found in Actinobacillus pleuropneumoniae serotype 5b (strain L20).